We begin with the raw amino-acid sequence, 222 residues long: Thiamine-phosphate synthase (222 aa).

4-amino-2-methyl-5-(diphosphooxymethyl)pyrimidine is bound by residues 44–48 (QFREK) and Asn-79. Positions 80 and 99 each coordinate Mg(2+). Ser-117 contributes to the 4-amino-2-methyl-5-(diphosphooxymethyl)pyrimidine binding site. 2-[(2R,5Z)-2-carboxy-4-methylthiazol-5(2H)-ylidene]ethyl phosphate is bound at residue 143-145 (TET). Residue Lys-146 participates in 4-amino-2-methyl-5-(diphosphooxymethyl)pyrimidine binding. Residues Gly-175 and 195–196 (IS) each bind 2-[(2R,5Z)-2-carboxy-4-methylthiazol-5(2H)-ylidene]ethyl phosphate.

It belongs to the thiamine-phosphate synthase family. In terms of assembly, monomer. The cofactor is Mg(2+).

It catalyses the reaction 2-[(2R,5Z)-2-carboxy-4-methylthiazol-5(2H)-ylidene]ethyl phosphate + 4-amino-2-methyl-5-(diphosphooxymethyl)pyrimidine + 2 H(+) = thiamine phosphate + CO2 + diphosphate. The catalysed reaction is 2-(2-carboxy-4-methylthiazol-5-yl)ethyl phosphate + 4-amino-2-methyl-5-(diphosphooxymethyl)pyrimidine + 2 H(+) = thiamine phosphate + CO2 + diphosphate. It carries out the reaction 4-methyl-5-(2-phosphooxyethyl)-thiazole + 4-amino-2-methyl-5-(diphosphooxymethyl)pyrimidine + H(+) = thiamine phosphate + diphosphate. Its pathway is cofactor biosynthesis; thiamine diphosphate biosynthesis; thiamine phosphate from 4-amino-2-methyl-5-diphosphomethylpyrimidine and 4-methyl-5-(2-phosphoethyl)-thiazole: step 1/1. Functionally, condenses 4-methyl-5-(beta-hydroxyethyl)thiazole monophosphate (THZ-P) and 2-methyl-4-amino-5-hydroxymethyl pyrimidine pyrophosphate (HMP-PP) to form thiamine monophosphate (TMP). Is also able to use the 2-methoxy analog MeO-HMP-PP, as substrate in vitro, but not the 2-trifluoromethyl analog CF(3)-HMP-PP. The sequence is that of Thiamine-phosphate synthase (thiE) from Bacillus subtilis (strain 168).